The chain runs to 56 residues: uncharacterized protein (56 aa).

This is an uncharacterized protein from Saccharomyces cerevisiae (strain ATCC 204508 / S288c) (Baker's yeast).